A 145-amino-acid polypeptide reads, in one-letter code: Large ribosomal subunit protein uL16 (145 aa).

The protein belongs to the universal ribosomal protein uL16 family. Part of the 50S ribosomal subunit.

In terms of biological role, binds 23S rRNA and is also seen to make contacts with the A and possibly P site tRNAs. The protein is Large ribosomal subunit protein uL16 of Exiguobacterium sp. (strain ATCC BAA-1283 / AT1b).